The chain runs to 544 residues: Coiled-coil domain-containing protein 82 (544 aa).

Positions methionine 1–lysine 14 are enriched in basic residues. Residues methionine 1 to isoleucine 294 form a disordered region. Residues histidine 16–arginine 27 show a composition bias toward basic and acidic residues. A compositionally biased stretch (acidic residues) spans aspartate 39–leucine 67. Phosphoserine is present on residues serine 88, serine 131, serine 154, serine 195, and serine 219. Positions serine 88–threonine 108 are enriched in polar residues. Over residues glutamate 112 to glutamine 132 the composition is skewed to basic and acidic residues. Positions methionine 223–lysine 248 are enriched in basic and acidic residues. A Phosphothreonine modification is found at threonine 227. The stretch at glutamate 229–serine 256 forms a coiled coil. Acidic residues predominate over residues aspartate 273–isoleucine 294. Residue serine 329 is modified to Phosphoserine.

This chain is Coiled-coil domain-containing protein 82 (CCDC82), found in Homo sapiens (Human).